The primary structure comprises 188 residues: MSWKNDLLAKLAQRDKSMETQKDVFLSFQFLSTRIASLERQLDTVQRDDSKKTVLDLLGEIDQLKQKLDLAEDSLKHETAKNKELVKELSTVKNNLNILTDGYKKLQERHLRLQEESKIKFQNLESLNDDILSLNIENNLLNDRMAKLKQENESLIERWMKRVKQEAEVLNDANEALSRSEKSLKPEG.

A coiled-coil region spans residues 27-185; the sequence is SFQFLSTRIA…ALSRSEKSLK (159 aa).

This sequence belongs to the ATG16 family. As to quaternary structure, homodimer. Part of the ATG5-ATG12/ATG16 complex. Several units of each may be present in this complex.

It localises to the preautophagosomal structure membrane. Stabilizes the ATG5-ATG12 conjugate which is necessary for autophagy. The ATG5-ATG12/ATG16 complex is required for efficient promotion of ATG8-conjugation to phosphatidylethanolamine and ATG8 localization to the pre-autophagosomal structure (PAS). Also recruits ATG3 to the PAS. Involved in endoplasmic reticulum-specific autophagic process and is essential for the survival of cells subjected to severe ER stress. The protein is Autophagy-related protein 16 (ATG16) of Pichia angusta (Yeast).